The primary structure comprises 145 residues: Phospholipase A2 (145 aa).

Positions 1–15 (MRLLVLAALLTVGAG) are cleaved as a signal peptide. Residue Q16 is modified to Pyrrolidone carboxylic acid. Positions 16–22 (QAGLNSR) are cleaved as a propeptide — removed by trypsin. Intrachain disulfides connect C33/C99, C49/C145, C51/C67, C66/C127, C73/C120, C83/C113, and C106/C118. The Ca(2+) site is built by Y50, G52, and G54. The active site involves H70. A Ca(2+)-binding site is contributed by D71. Residue D121 is part of the active site.

It belongs to the phospholipase A2 family. In terms of assembly, monomer or homodimer. Ca(2+) serves as cofactor. In terms of processing, activated by trypsin cleavage in the duodenum. Can also be activated by thrombin or autocatalytically.

The protein localises to the secreted. It carries out the reaction a 1,2-diacyl-sn-glycero-3-phosphocholine + H2O = a 1-acyl-sn-glycero-3-phosphocholine + a fatty acid + H(+). It catalyses the reaction 1,2-ditetradecanoyl-sn-glycero-3-phosphocholine + H2O = 1-tetradecanoyl-sn-glycero-3-phosphocholine + tetradecanoate + H(+). The catalysed reaction is 1,2-dihexadecanoyl-sn-glycero-3-phosphocholine + H2O = 1-hexadecanoyl-sn-glycero-3-phosphocholine + hexadecanoate + H(+). The enzyme catalyses 1-hexadecanoyl-2-(9Z-octadecenoyl)-sn-glycero-3-phosphocholine + H2O = 1-hexadecanoyl-sn-glycero-3-phosphocholine + (9Z)-octadecenoate + H(+). It carries out the reaction 1-hexadecanoyl-2-(5Z,8Z,11Z,14Z-eicosatetraenoyl)-sn-glycero-3-phosphocholine + H2O = 1-hexadecanoyl-sn-glycero-3-phosphocholine + (5Z,8Z,11Z,14Z)-eicosatetraenoate + H(+). It catalyses the reaction 1-hexadecanoyl-2-(9Z-octadecenoyl)-sn-glycero-3-phospho-(1'-sn-glycerol) + H2O = 1-hexadecanoyl-sn-glycero-3-phospho-(1'-sn-glycerol) + (9Z)-octadecenoate + H(+). The catalysed reaction is N-hexadecanoyl-1,2-di-(9Z-octadecenoyl)-sn-glycero-3-phosphoethanolamine + H2O = N-hexadecanoyl-1-(9Z-octadecenoyl)-sn-glycero-3-phosphoethanolamine + (9Z)-octadecenoate + H(+). The enzyme catalyses 1-hexadecanoyl-2-(9Z,12Z-octadecadienoyl)-sn-glycero-3-phosphoethanolamine + H2O = 1-hexadecanoyl-sn-glycero-3-phosphoethanolamine + (9Z,12Z)-octadecadienoate + H(+). It carries out the reaction N,1-dihexadecanoyl-2-(9Z,12Z-octadecadienoyl)-sn-glycero-3-phosphoethanolamine + H2O = N,1-dihexadecanoyl-sn-glycero-3-phosphoethanolamine + (9Z,12Z)-octadecadienoate + H(+). Functionally, secretory calcium-dependent phospholipase A2 that primarily targets dietary phospholipids in the intestinal tract. Hydrolyzes the ester bond of the fatty acyl group attached at sn-2 position of phospholipids (phospholipase A2 activity) with preference for phosphatidylethanolamines and phosphatidylglycerols over phosphatidylcholines. May play a role in the biosynthesis of N-acyl ethanolamines that regulate energy metabolism and inflammation in the intestinal tract. Hydrolyzes N-acyl phosphatidylethanolamines to N-acyl lysophosphatidylethanolamines, which are further cleaved by a lysophospholipase D to release N-acyl ethanolamines. May act in an autocrine and paracrine manner. Has anti-helminth activity in a process regulated by gut microbiota. Upon helminth infection of intestinal epithelia, directly affects phosphatidylethanolamine contents in the membrane of helminth larvae, likely controlling an array of phospholipid-mediated cellular processes such as membrane fusion and cell division while providing for better immune recognition, ultimately reducing larvae integrity and infectivity. The protein is Phospholipase A2 (PLA2G1B) of Bos taurus (Bovine).